Reading from the N-terminus, the 511-residue chain is GMP synthase [glutamine-hydrolyzing] (511 aa).

Positions 5–195 (DILVLDFGSQ…AKYACNCESV (191 aa)) constitute a Glutamine amidotransferase type-1 domain. Residue cysteine 82 is the Nucleophile of the active site. Residues histidine 169 and glutamate 171 contribute to the active site. Positions 196–386 (WNMGSFAKTQ…LGLSKEVVYR (191 aa)) constitute a GMPS ATP-PPase domain. Residue 223–229 (SGGVDSS) participates in ATP binding.

In terms of assembly, homodimer.

It carries out the reaction XMP + L-glutamine + ATP + H2O = GMP + L-glutamate + AMP + diphosphate + 2 H(+). The protein operates within purine metabolism; GMP biosynthesis; GMP from XMP (L-Gln route): step 1/1. Functionally, catalyzes the synthesis of GMP from XMP. The protein is GMP synthase [glutamine-hydrolyzing] of Campylobacter jejuni (strain RM1221).